Reading from the N-terminus, the 113-residue chain is Ig kappa chain V-II region 7S34.1 (113 aa).

The framework-1 stretch occupies residues 1–23 (DIVMTQTAPSALVTPGESVSISC). Cysteine 23 and cysteine 93 are disulfide-bonded. The tract at residues 24–39 (RSSKSLLHSNGNTYLY) is complementarity-determining-1. Residues 40–54 (WFLQRPGQCPQLLIY) form a framework-2 region. The interval 55–61 (RMSNLAS) is complementarity-determining-2. The interval 62 to 93 (GVPDRFSGSGSGTAFTLRISRVEAEDVGVYYC) is framework-3. Residues 94-102 (MQQREYPYT) are complementarity-determining-3. The segment at 103 to 112 (FGGGTKLEIK) is framework-4.

The polypeptide is Ig kappa chain V-II region 7S34.1 (Mus musculus (Mouse)).